The primary structure comprises 878 residues: MKQLTSAQVRQMFLDFFKEKGHDVEPSASLIPDEDPTLLWINSGVATLKKYFDGRVVPNNPRITNAQKSIRTNDIENVGKTARHHTFFEMLGNFSVGDYFKEDAIPWAWEFLTSDKWIGLDPEKLYVTVYPKDKDAHRIWHEKVGLAEDRIIEVEDNFWDIGEGPCGPDSEIFYDRGQSFNNVSEDDPENYPGGENERYLEVWNIVFSEFNHLPNGEYVEQPHKNIDTGMGLERLVSVIQEAPTNFETDLFMPLIEATAAMSDHKQYGQNAADDISFKIIADHARAVTFAIGDGAMPANEGRGYVLRRLIRRAILNGKKLGINDAFMYKLVPIVGEIMHSYYPDVLEQKDFIEKVIRSEEDRFRETLNDGLRLLNQTIEAVKAENETEINGADAFKLFDTFGFPIELTTEYAEDEGLTVDQAGFEKEMAAQKARARNARSDEQSMGSQNEVLLNIKTKSEFTGYSELETESRLADIIQDNAEQESVTTGVAQLVFEATPFYAEMGGQVADQGIIKNLAGQVVAEVTDVQYAPNGQPLHTVKVLKEMISGVHYTLSVDPTFRGGVVKNHTATHLLDQALRDVLGEHTHQAGSLVEPDYLRFDFTNLGQVTPDQLAEVEQIVNDKIWAALPVNTVETDIETAKQMGAIALFTEKYGKTVRVVQIGDYSMELCGGTHANNTSDLGLFKITSESGIGAGTRRIEAVTSKAAFKYLNDKQVLLNELASELKVAQTKDLPKKIQQLQADLKAEQKENEQLKAKFAQEQAGNVFENVVEAGQWRLVAADAKVAGMNELRQLADQWQQKQISDVLVLATVAGDKVSLIVAVAPDAIKAGIKAGDLIKQIAPLVGGGGGGRPDMAQAGGKNPAGIPDALAAAKEFLA.

Residues histidine 568, histidine 572, cysteine 670, and histidine 674 each contribute to the Zn(2+) site.

This sequence belongs to the class-II aminoacyl-tRNA synthetase family. Requires Zn(2+) as cofactor.

It is found in the cytoplasm. The catalysed reaction is tRNA(Ala) + L-alanine + ATP = L-alanyl-tRNA(Ala) + AMP + diphosphate. In terms of biological role, catalyzes the attachment of alanine to tRNA(Ala) in a two-step reaction: alanine is first activated by ATP to form Ala-AMP and then transferred to the acceptor end of tRNA(Ala). Also edits incorrectly charged Ser-tRNA(Ala) and Gly-tRNA(Ala) via its editing domain. The sequence is that of Alanine--tRNA ligase from Latilactobacillus sakei subsp. sakei (strain 23K) (Lactobacillus sakei subsp. sakei).